A 419-amino-acid polypeptide reads, in one-letter code: N-acylneuraminate cytidylyltransferase (419 aa).

This sequence belongs to the CMP-NeuNAc synthase family. In terms of assembly, monomer. May form aggregates. It depends on Mg(2+) as a cofactor. Requires Mn(2+) as cofactor.

The protein localises to the cytoplasm. The catalysed reaction is an N-acylneuraminate + CTP = a CMP-N-acyl-beta-neuraminate + diphosphate. Its activity is regulated as follows. Inhibited by the CTP analogs 5-mercuri-CTP and CTP-2',3'-dialdehyde. In terms of biological role, catalyzes the formation of CMP-N-acetylneuraminic acid (CMP-NeuNAc), which is essential for the formation of the capsule. The polypeptide is N-acylneuraminate cytidylyltransferase (neuA) (Escherichia coli O18:K1:H7 (strain RS218 / NMEC)).